The chain runs to 338 residues: DNA-directed RNA polymerase subunit alpha (338 aa).

The alpha N-terminal domain (alpha-NTD) stretch occupies residues 1-234 (MIQKNWQELI…DQLQLFINFE (234 aa)). Residues 250–338 (FNKNLLRKVD…ELAKKLEEPY (89 aa)) are alpha C-terminal domain (alpha-CTD).

The protein belongs to the RNA polymerase alpha chain family. As to quaternary structure, homodimer. The RNAP catalytic core consists of 2 alpha, 1 beta, 1 beta' and 1 omega subunit. When a sigma factor is associated with the core the holoenzyme is formed, which can initiate transcription.

It catalyses the reaction RNA(n) + a ribonucleoside 5'-triphosphate = RNA(n+1) + diphosphate. DNA-dependent RNA polymerase catalyzes the transcription of DNA into RNA using the four ribonucleoside triphosphates as substrates. This is DNA-directed RNA polymerase subunit alpha from Paramagnetospirillum magneticum (strain ATCC 700264 / AMB-1) (Magnetospirillum magneticum).